The primary structure comprises 70 residues: Large ribosomal subunit protein uL29 (70 aa).

The protein belongs to the universal ribosomal protein uL29 family.

This Clostridium novyi (strain NT) protein is Large ribosomal subunit protein uL29.